The primary structure comprises 146 residues: D-aminoacyl-tRNA deacylase (146 aa).

Residues 138–139 (GP) carry the Gly-cisPro motif, important for rejection of L-amino acids motif.

This sequence belongs to the DTD family. Homodimer.

The protein resides in the cytoplasm. It catalyses the reaction glycyl-tRNA(Ala) + H2O = tRNA(Ala) + glycine + H(+). The enzyme catalyses a D-aminoacyl-tRNA + H2O = a tRNA + a D-alpha-amino acid + H(+). In terms of biological role, an aminoacyl-tRNA editing enzyme that deacylates mischarged D-aminoacyl-tRNAs. Also deacylates mischarged glycyl-tRNA(Ala), protecting cells against glycine mischarging by AlaRS. Acts via tRNA-based rather than protein-based catalysis; rejects L-amino acids rather than detecting D-amino acids in the active site. By recycling D-aminoacyl-tRNA to D-amino acids and free tRNA molecules, this enzyme counteracts the toxicity associated with the formation of D-aminoacyl-tRNA entities in vivo and helps enforce protein L-homochirality. This is D-aminoacyl-tRNA deacylase from Xanthomonas oryzae pv. oryzae (strain MAFF 311018).